Reading from the N-terminus, the 210-residue chain is 3,4-dihydroxy-2-butanone 4-phosphate synthase (210 aa).

D-ribulose 5-phosphate is bound by residues 33 to 34 (RE), aspartate 38, 146 to 150 (RRGHT), and glutamate 170. Glutamate 34 contributes to the Mg(2+) binding site. Histidine 149 serves as a coordination point for Mg(2+).

The protein belongs to the DHBP synthase family. As to quaternary structure, homodimer. The cofactor is Mg(2+). Requires Mn(2+) as cofactor.

It catalyses the reaction D-ribulose 5-phosphate = (2S)-2-hydroxy-3-oxobutyl phosphate + formate + H(+). It participates in cofactor biosynthesis; riboflavin biosynthesis; 2-hydroxy-3-oxobutyl phosphate from D-ribulose 5-phosphate: step 1/1. Functionally, catalyzes the conversion of D-ribulose 5-phosphate to formate and 3,4-dihydroxy-2-butanone 4-phosphate. The chain is 3,4-dihydroxy-2-butanone 4-phosphate synthase from Chromobacterium violaceum (strain ATCC 12472 / DSM 30191 / JCM 1249 / CCUG 213 / NBRC 12614 / NCIMB 9131 / NCTC 9757 / MK).